The sequence spans 267 residues: Orotidine 5'-phosphate decarboxylase (267 aa).

Substrate-binding positions include aspartate 38, 60–62 (KTH), 92–101 (DRKFADIGNT), tyrosine 218, and arginine 236. The active-site Proton donor is the lysine 94.

This sequence belongs to the OMP decarboxylase family.

It catalyses the reaction orotidine 5'-phosphate + H(+) = UMP + CO2. It participates in pyrimidine metabolism; UMP biosynthesis via de novo pathway; UMP from orotate: step 2/2. The chain is Orotidine 5'-phosphate decarboxylase (URA3) from Debaryomyces hansenii (strain ATCC 36239 / CBS 767 / BCRC 21394 / JCM 1990 / NBRC 0083 / IGC 2968) (Yeast).